The chain runs to 116 residues: Large ribosomal subunit protein uL18 (116 aa).

Belongs to the universal ribosomal protein uL18 family. Part of the 50S ribosomal subunit; part of the 5S rRNA/L5/L18/L25 subcomplex. Contacts the 5S and 23S rRNAs.

This is one of the proteins that bind and probably mediate the attachment of the 5S RNA into the large ribosomal subunit, where it forms part of the central protuberance. This is Large ribosomal subunit protein uL18 from Mycoplasma pneumoniae (strain ATCC 29342 / M129 / Subtype 1) (Mycoplasmoides pneumoniae).